The primary structure comprises 404 residues: Glucose-1-phosphate adenylyltransferase (404 aa).

Residues Tyr-99, Gly-164, 179 to 180, and Ser-197 each bind alpha-D-glucose 1-phosphate; that span reads EK.

Belongs to the bacterial/plant glucose-1-phosphate adenylyltransferase family.

The enzyme catalyses alpha-D-glucose 1-phosphate + ATP + H(+) = ADP-alpha-D-glucose + diphosphate. It functions in the pathway capsule biogenesis; capsule polysaccharide biosynthesis. The protein operates within glycan biosynthesis; glycogen biosynthesis. Functionally, involved in the biosynthesis of ADP-glucose, a building block, required in the biosynthesis of maltose-1-phosphate (M1P) and in the elongation reactions to produce linear alpha-1,4-glucans. Catalyzes the reaction between ATP and alpha-D-glucose 1-phosphate (G1P) to produce pyrophosphate and ADP-Glc. The chain is Glucose-1-phosphate adenylyltransferase from Mycolicibacterium paratuberculosis (strain ATCC BAA-968 / K-10) (Mycobacterium paratuberculosis).